We begin with the raw amino-acid sequence, 102 residues long: Bowman-Birk type wound-induced proteinase inhibitor WIP1 (102 aa).

The signal sequence occupies residues 1–15; it reads MKSSPHLVLILCLQA. 5 cysteine pairs are disulfide-bonded: cysteine 46–cysteine 102, cysteine 47–cysteine 60, cysteine 50–cysteine 98, cysteine 67–cysteine 74, and cysteine 71–cysteine 90.

Belongs to the Bowman-Birk serine protease inhibitor family.

This chain is Bowman-Birk type wound-induced proteinase inhibitor WIP1 (WIP1), found in Zea mays (Maize).